A 371-amino-acid polypeptide reads, in one-letter code: MKDDATGADFLLSGYDYELPEDRIAQHPPVERGLSRLLVLDRTTGERIHARFADLAEHLPEGALLVANNSKVLPARLLGHRPTGGKVEFLLLTPLPLVTPLAAGPASGTVEPGWCVAEVEGLLRASKPLRPGDTLSFGDDLRVEVVHKGEFGRSMVLLFWRGELATLFAREGHLPLPPYIRRADGDEDRDRYQTVFAREDRLGSVAAPTAGLHFTPSLRETLTARGHQWAEVTLYVGYGTFSPVRCADIRDHAMHREYVEVTAETVEVIRRAKADGRPVVAVGTTSCRVLEGVATAKGTLEPYAGWTDIFMYPGYTFKVVDHLITNFHLPESSLLMLVSAFAGRERVLATYREAIEEGYRFFSYGDAMLLR.

It belongs to the QueA family. Monomer.

Its subcellular location is the cytoplasm. It carries out the reaction 7-aminomethyl-7-carbaguanosine(34) in tRNA + S-adenosyl-L-methionine = epoxyqueuosine(34) in tRNA + adenine + L-methionine + 2 H(+). It participates in tRNA modification; tRNA-queuosine biosynthesis. Transfers and isomerizes the ribose moiety from AdoMet to the 7-aminomethyl group of 7-deazaguanine (preQ1-tRNA) to give epoxyqueuosine (oQ-tRNA). The sequence is that of S-adenosylmethionine:tRNA ribosyltransferase-isomerase from Nitratidesulfovibrio vulgaris (strain ATCC 29579 / DSM 644 / CCUG 34227 / NCIMB 8303 / VKM B-1760 / Hildenborough) (Desulfovibrio vulgaris).